Here is a 233-residue protein sequence, read N- to C-terminus: Lipoprotein-releasing system ATP-binding protein LolD (233 aa).

Positions 7-233 (IHCEKLSKTY…QLQSESERNH (227 aa)) constitute an ABC transporter domain. Position 43–50 (43–50 (GASGAGKS)) interacts with ATP.

Belongs to the ABC transporter superfamily. Lipoprotein translocase (TC 3.A.1.125) family. The complex is composed of two ATP-binding proteins (LolD) and two transmembrane proteins (LolC and LolE).

The protein localises to the cell inner membrane. Its function is as follows. Part of the ABC transporter complex LolCDE involved in the translocation of mature outer membrane-directed lipoproteins, from the inner membrane to the periplasmic chaperone, LolA. Responsible for the formation of the LolA-lipoprotein complex in an ATP-dependent manner. This Coxiella burnetii (strain RSA 493 / Nine Mile phase I) protein is Lipoprotein-releasing system ATP-binding protein LolD.